The chain runs to 194 residues: Peptidyl-tRNA hydrolase (194 aa).

Y17 contributes to the tRNA binding site. H22 acts as the Proton acceptor in catalysis. Y68, N70, and N116 together coordinate tRNA.

Belongs to the PTH family. In terms of assembly, monomer.

It is found in the cytoplasm. It catalyses the reaction an N-acyl-L-alpha-aminoacyl-tRNA + H2O = an N-acyl-L-amino acid + a tRNA + H(+). Its function is as follows. Hydrolyzes ribosome-free peptidyl-tRNAs (with 1 or more amino acids incorporated), which drop off the ribosome during protein synthesis, or as a result of ribosome stalling. Catalyzes the release of premature peptidyl moieties from peptidyl-tRNA molecules trapped in stalled 50S ribosomal subunits, and thus maintains levels of free tRNAs and 50S ribosomes. The sequence is that of Peptidyl-tRNA hydrolase from Pseudomonas syringae pv. tomato (strain ATCC BAA-871 / DC3000).